We begin with the raw amino-acid sequence, 470 residues long: N amino acid transport system protein (470 aa).

The span at 1 to 11 (MDSQYETKKND) shows a compositional bias: basic and acidic residues. The tract at residues 1 to 21 (MDSQYETKKNDPNAIMPYPES) is disordered. Over 1–56 (MDSQYETKKNDPNAIMPYPESNDEHVGEVRGLGGGIMDKEPEAQEGHAKFHRLGWK) the chain is Extracellular. Transmembrane regions (helical) follow at residues 57–77 (RLTV…LPGA) and 78–98 (FATL…LICI). At 99-131 (YTAHVIGQTKLKHPEIAHYADVGRVMFGRWGYE) the chain is on the extracellular side. A helical transmembrane segment spans residues 132–152 (IISFMFVLQLIFIVGSHVLTG). Over 153–168 (TIMWGTITDNGNGTCS) the chain is Cytoplasmic. A run of 2 helical transmembrane segments spans residues 169–189 (LVFG…PSFA) and 191–211 (VAIL…ITMI). The Cytoplasmic portion of the chain corresponds to 212-236 (ATGIRSSHQEGGLAAVPWSCWPKED). A helical transmembrane segment spans residues 237 to 257 (LSLAEGFIAVSNIVFAYSFAM). Over 258–275 (CQFSFMDEMHTPSDYKKS) the chain is Extracellular. A helical transmembrane segment spans residues 276 to 296 (IVALGLIEIFIYTVTGGVVYA). The Cytoplasmic portion of the chain corresponds to 297–316 (FVGPEVQSPALLSAGPLLAK). Residues 317–337 (VAFGIALPVIFISGSINTVVV) traverse the membrane as a helical segment. Residues 338 to 357 (SRYLIERIWPNNVIRYVNTP) are Extracellular-facing. A helical membrane pass occupies residues 358–378 (AGWMVWLGFDFGITLIAWVIA). Over 379–386 (EAIPFFSD) the chain is Cytoplasmic. A helical membrane pass occupies residues 387–407 (LLAICSALFISGFSFYFPALM). Topologically, residues 408 to 427 (YFKITRNDAKSQGKKYFLDA) are extracellular. Residues 428 to 448 (LNMLCFVIGMGILGIGTYAAI) traverse the membrane as a helical segment. Over 449–470 (QDIMDRYDHGKVSKPYSCAPLA) the chain is Cytoplasmic.

The protein belongs to the amino acid/polyamine transporter 2 family.

The protein resides in the membrane. Its function is as follows. Required for the transport of neutral aliphatic and aromatic amino acids via the N system. This Neurospora crassa (strain ATCC 24698 / 74-OR23-1A / CBS 708.71 / DSM 1257 / FGSC 987) protein is N amino acid transport system protein (mtr).